The following is a 508-amino-acid chain: Phytepsin (508 aa).

Residues 1-27 (MGTRGLALALLAAVLLLQTVLPAASEA) form the signal peptide. A propeptide spans 28–66 (EGLVRIALKKRPIDRNSRVATGLSGGEEQPLLSGANPLR) (activation peptide). The 422-residue stretch at 84 to 505 (YFGEIGVGTP…DYGKLRIGFA (422 aa)) folds into the Peptidase A1 domain. Asp102 is an active-site residue. Intrachain disulfides connect Cys115–Cys121 and Cys280–Cys284. Asp289 is a catalytic residue. The Saposin B-type domain occupies 314-419 (VVSQECKTIV…NQLCNRLPSP (106 aa)). Disulfide bonds link Cys319–Cys413, Cys344–Cys385, Cys350–Cys382, and Cys427–Cys464. Residue Asn399 is glycosylated (N-linked (GlcNAc...) asparagine).

The protein belongs to the peptidase A1 family. In terms of assembly, heterodimer of two subunits (29 kDa and 11 kDa) processed from the precursor molecule. A large enzyme (32 kDa and 16 kDa) is an intermediate precursor form. As to expression, embryo and leaf.

Its subcellular location is the vacuole. It catalyses the reaction Prefers hydrophobic residues Phe, Val, Ile, Leu, and Ala at P1 and P1', but also cleaves -Phe-|-Asp- and -Asp-|-Asp- bonds in 2S albumin from plant seeds.. Involved in the breakdown of propeptides of storage proteins in protein-storage vacuoles. The protein is Phytepsin of Hordeum vulgare (Barley).